Consider the following 156-residue polypeptide: Arginine repressor (156 aa).

This sequence belongs to the ArgR family.

It localises to the cytoplasm. The protein operates within amino-acid biosynthesis; L-arginine biosynthesis [regulation]. Regulates arginine biosynthesis genes. This Shewanella oneidensis (strain ATCC 700550 / JCM 31522 / CIP 106686 / LMG 19005 / NCIMB 14063 / MR-1) protein is Arginine repressor.